We begin with the raw amino-acid sequence, 209 residues long: Small ribosomal subunit protein uS4 (209 aa).

In terms of domain architecture, S4 RNA-binding spans 99 to 164 (GRLDSVVYRM…QLRVKAALEA (66 aa)).

Belongs to the universal ribosomal protein uS4 family. Part of the 30S ribosomal subunit. Contacts protein S5. The interaction surface between S4 and S5 is involved in control of translational fidelity.

Functionally, one of the primary rRNA binding proteins, it binds directly to 16S rRNA where it nucleates assembly of the body of the 30S subunit. In terms of biological role, with S5 and S12 plays an important role in translational accuracy. In Aromatoleum aromaticum (strain DSM 19018 / LMG 30748 / EbN1) (Azoarcus sp. (strain EbN1)), this protein is Small ribosomal subunit protein uS4.